The chain runs to 274 residues: tRNA pseudouridine synthase A (274 aa).

The active-site Nucleophile is the Asp51. Residue Tyr109 participates in substrate binding.

This sequence belongs to the tRNA pseudouridine synthase TruA family. In terms of assembly, homodimer.

It carries out the reaction uridine(38/39/40) in tRNA = pseudouridine(38/39/40) in tRNA. Formation of pseudouridine at positions 38, 39 and 40 in the anticodon stem and loop of transfer RNAs. This chain is tRNA pseudouridine synthase A, found in Acidovorax ebreus (strain TPSY) (Diaphorobacter sp. (strain TPSY)).